A 327-amino-acid chain; its full sequence is DNA-directed RNA polymerase subunit alpha (327 aa).

The tract at residues 1–233 is alpha N-terminal domain (alpha-NTD); sequence MVREKVKVST…NLFIPFLHVE (233 aa). The segment at 266–327 is alpha C-terminal domain (alpha-CTD); it reads EQGFQYIFID…KKILDILEKK (62 aa).

The protein belongs to the RNA polymerase alpha chain family. As to quaternary structure, in plastids the minimal PEP RNA polymerase catalytic core is composed of four subunits: alpha, beta, beta', and beta''. When a (nuclear-encoded) sigma factor is associated with the core the holoenzyme is formed, which can initiate transcription.

It localises to the plastid. Its subcellular location is the chloroplast. It catalyses the reaction RNA(n) + a ribonucleoside 5'-triphosphate = RNA(n+1) + diphosphate. Its function is as follows. DNA-dependent RNA polymerase catalyzes the transcription of DNA into RNA using the four ribonucleoside triphosphates as substrates. The chain is DNA-directed RNA polymerase subunit alpha from Barbarea verna (Land cress).